Reading from the N-terminus, the 572-residue chain is MVRTRLAISVVLVSTLLLLNVKAKSVDPYKVLGVSKDAKQREIQKAFHKQSLKYHPDKNKDKGAQEKFAEINNAYEILSDEEKRKNYDLYGDEKGQPGFDSGFPGGNGGYSYSSSGGGFNFGGPGGWQNMGGGGGSKSFSFSFGGPSESSFGFGMDDIFSMFSGGSSKGKEQFGGFGSSSNAESKSKSSTVAAIKTINSQVYKKDVVDQGMTWLLLSYLPSQRGSQYHESIIEEVAESLQGALKVGRLNCETESSLCKQLGIVPRRAPRMFVYSYTSSGKATLAEYTEELVAKKVKSFCQEHLPRFSKKIDLNTFDVSAVSSQKTPKVLLLSTKKDTPVIWRVLSGLYNGRFVFYNTEVHDTSDPKIQKLGVDKFPAIVGWLSNGEKQVLKTGITVKNLKSAVQELGKLLEGLEKKNKKVSSKSQAGQAPNESSEKIPLLSRPNFDSICGENTPVCIIGAFRSSNGKEKLQSIMSKVSQKSLSRRQASTTGSQDTVSYSLLDATKQSAFLSSLDKSEFKTSSDKLLIAYKPRRGKFATFKGDMTIEEVEKFVAAVLNGDIQFTKTRQKPQIK.

The signal sequence occupies residues Met-1–Ala-23. The J domain maps to Asp-27–Gly-91. Residues Ile-394 to Lys-423 are a coiled coil. A disordered region spans residues Lys-419–Leu-439. Residues Ser-422–Glu-432 are compositionally biased toward polar residues. Asn-431 carries N-linked (GlcNAc...) asparagine glycosylation.

In terms of assembly, interacts with BIP1 and BIP3. The interaction with BIP1 and BIP3 activates the ATPase enzyme activities of BIP1 and BIP3. Not N-glycosylated. As to expression, expressed in roots, leaves, stems, flowers, mature pollen grains and growing pollen tubes.

It localises to the endoplasmic reticulum lumen. Regulates protein folding in the endoplasmic reticulum (ER) lumen. Functions probably as a co-molecular chaperone that is required for normal growth of pollen tubes under high-temperature stress. The chain is DnaJ protein ERDJ3A (ERDJ3A) from Arabidopsis thaliana (Mouse-ear cress).